The following is a 298-amino-acid chain: Capsid vertex protein (298 aa).

It belongs to the Tevenvirinae capsid vertex family. As to quaternary structure, homopentamer. Interacts with the portal protein. Interacts with the major capsid protein that forms hexamers.

Its subcellular location is the virion. Functionally, capsid protein that self-associates to form pentons, building the capsid in association with hexamers of the major capsid protein and one dodecamer of the portal protein. In Vibrio parahaemolyticus (KVP40), this protein is Capsid vertex protein.